A 273-amino-acid polypeptide reads, in one-letter code: NADPH-dependent 7-cyano-7-deazaguanine reductase (273 aa).

Substrate is bound at residue 80–82; sequence VES. Position 82-83 (82-83) interacts with NADPH; sequence SK. Cysteine 180 serves as the catalytic Thioimide intermediate. Catalysis depends on aspartate 187, which acts as the Proton donor. 219–220 is a binding site for substrate; sequence HE. Residue 248 to 249 participates in NADPH binding; that stretch reads RG.

The protein belongs to the GTP cyclohydrolase I family. QueF type 2 subfamily. As to quaternary structure, homodimer.

The protein resides in the cytoplasm. The enzyme catalyses 7-aminomethyl-7-carbaguanine + 2 NADP(+) = 7-cyano-7-deazaguanine + 2 NADPH + 3 H(+). It participates in tRNA modification; tRNA-queuosine biosynthesis. In terms of biological role, catalyzes the NADPH-dependent reduction of 7-cyano-7-deazaguanine (preQ0) to 7-aminomethyl-7-deazaguanine (preQ1). The chain is NADPH-dependent 7-cyano-7-deazaguanine reductase from Bordetella bronchiseptica (strain ATCC BAA-588 / NCTC 13252 / RB50) (Alcaligenes bronchisepticus).